We begin with the raw amino-acid sequence, 246 residues long: MILFPAIDLKEGQCVRLVEGRMDSATVYSNDPGSMARLWQDQGAQYIHVVDLDGAFAGQPRNRQSIAQIVQGVQVPVQVGGGIRDLETIEDLLSLGVDRVILGSAAILKPELVAEACRKYGQRILLGIDAKDGQVAIQGWGETVKRTALDLALEMKQLGIERAVFTDIRRDGKLSGPNLAATGELARNSGLRVIASGGVASLEDIRQLKKLEQDGVEGAILGKALYTNAVKLPEALVIARGEESVC.

The active-site Proton acceptor is D8. The active-site Proton donor is D129.

Belongs to the HisA/HisF family.

The protein resides in the cytoplasm. The enzyme catalyses 1-(5-phospho-beta-D-ribosyl)-5-[(5-phospho-beta-D-ribosylamino)methylideneamino]imidazole-4-carboxamide = 5-[(5-phospho-1-deoxy-D-ribulos-1-ylimino)methylamino]-1-(5-phospho-beta-D-ribosyl)imidazole-4-carboxamide. The protein operates within amino-acid biosynthesis; L-histidine biosynthesis; L-histidine from 5-phospho-alpha-D-ribose 1-diphosphate: step 4/9. The polypeptide is 1-(5-phosphoribosyl)-5-[(5-phosphoribosylamino)methylideneamino] imidazole-4-carboxamide isomerase (Desulforamulus reducens (strain ATCC BAA-1160 / DSM 100696 / MI-1) (Desulfotomaculum reducens)).